The primary structure comprises 612 residues: UvrABC system protein C (612 aa).

One can recognise a GIY-YIG domain in the interval 20 to 98 (THSGVYRMLD…IKQHRPKYNI (79 aa)). The UVR domain maps to 208–243 (SSVLEEISAKMYQASEDMEYEKAQVYRDQLVVLRKL).

It belongs to the UvrC family. Interacts with UvrB in an incision complex.

It localises to the cytoplasm. Its function is as follows. The UvrABC repair system catalyzes the recognition and processing of DNA lesions. UvrC both incises the 5' and 3' sides of the lesion. The N-terminal half is responsible for the 3' incision and the C-terminal half is responsible for the 5' incision. This Francisella tularensis subsp. holarctica (strain FTNF002-00 / FTA) protein is UvrABC system protein C.